Here is a 118-residue protein sequence, read N- to C-terminus: uncharacterized protein (118 aa).

The signal sequence occupies residues 1 to 22 (MKMSYLRSGIVGFLAGASLSYA). The stretch at 41–71 (TATEALETDKQLYKKIEKKIEELESSCVKKS) forms a coiled coil.

This is an uncharacterized protein from Schizosaccharomyces pombe (strain 972 / ATCC 24843) (Fission yeast).